The sequence spans 540 residues: Chaperonin GroEL (540 aa).

ATP-binding positions include 29-32, 86-90, Gly413, 476-478, and Asp492; these read TIGP, DGTTT, and NAA.

The protein belongs to the chaperonin (HSP60) family. In terms of assembly, forms a cylinder of 14 subunits composed of two heptameric rings stacked back-to-back. Interacts with the co-chaperonin GroES.

The protein resides in the cytoplasm. The enzyme catalyses ATP + H2O + a folded polypeptide = ADP + phosphate + an unfolded polypeptide.. Its function is as follows. Together with its co-chaperonin GroES, plays an essential role in assisting protein folding. The GroEL-GroES system forms a nano-cage that allows encapsulation of the non-native substrate proteins and provides a physical environment optimized to promote and accelerate protein folding. The protein is Chaperonin GroEL of Staphylococcus saprophyticus subsp. saprophyticus (strain ATCC 15305 / DSM 20229 / NCIMB 8711 / NCTC 7292 / S-41).